Consider the following 367-residue polypeptide: WD repeat-containing protein 31 (367 aa).

WD repeat units follow at residues Ala53–Trp90, Asn94–Leu132, Gln137–Val175, Gln179–Ser217, Gln221–Leu264, Asn269–Gln311, and Ala315–Met353.

The protein is WD repeat-containing protein 31 (WDR31) of Homo sapiens (Human).